A 74-amino-acid chain; its full sequence is Omega-filistatoxin-Kh1a (74 aa).

Post-translationally, contains 6 disulfide bonds. As to expression, expressed by the venom gland.

It is found in the secreted. Its function is as follows. Potently blocks vertebrate calcium channels Cav1 and Cav2. Is the most active on Cav2.2/CACNA1B (from HEK) (IC(50)=2.3 nM), followed by Cav2.1/CACNA1A (IC(50)=4.3 nM), Cav2.2/CACNA1B (from oocyte) (IC(50)=14.4 nM), Cav1.2/CACNA1C (IC(50)=26.8 nM), and Cav2.3/CACNA1E (IC(50)=96.4 nM). The polypeptide is Omega-filistatoxin-Kh1a (Kukulcania hibernalis (Southern house spider)).